Here is a 367-residue protein sequence, read N- to C-terminus: UDP-N-acetylenolpyruvoylglucosamine reductase 2 (367 aa).

Residues 31–198 (IGGKPRSAVR…LAIELQLLTD (168 aa)) enclose the FAD-binding PCMH-type domain. Residue Arg176 is part of the active site. Ser256 serves as the catalytic Proton donor. The active site involves Glu357.

Belongs to the MurB family. It depends on FAD as a cofactor.

The protein localises to the cytoplasm. It catalyses the reaction UDP-N-acetyl-alpha-D-muramate + NADP(+) = UDP-N-acetyl-3-O-(1-carboxyvinyl)-alpha-D-glucosamine + NADPH + H(+). It participates in cell wall biogenesis; peptidoglycan biosynthesis. Functionally, cell wall formation. This chain is UDP-N-acetylenolpyruvoylglucosamine reductase 2 (murB2), found in Corynebacterium glutamicum (strain ATCC 13032 / DSM 20300 / JCM 1318 / BCRC 11384 / CCUG 27702 / LMG 3730 / NBRC 12168 / NCIMB 10025 / NRRL B-2784 / 534).